A 127-amino-acid polypeptide reads, in one-letter code: Small ribosomal subunit protein bS6 (127 aa).

Positions 96 to 127 (VTTPSPMMKEEKSRSLTPAAGDEGKPAEAAEA) are disordered. Residues 117–127 (DEGKPAEAAEA) show a composition bias toward basic and acidic residues.

The protein belongs to the bacterial ribosomal protein bS6 family.

Its function is as follows. Binds together with bS18 to 16S ribosomal RNA. This is Small ribosomal subunit protein bS6 from Azoarcus sp. (strain BH72).